A 142-amino-acid polypeptide reads, in one-letter code: Alpha-lactalbumin (142 aa).

The N-terminal stretch at 1–18 (MMSFVSLLLVGILFHATQ) is a signal peptide. The 123-residue stretch at 20–142 (EQLTKCEVFR…KLDQWLCEKL (123 aa)) folds into the C-type lysozyme domain. Cystine bridges form between Cys-25-Cys-139, Cys-47-Cys-130, Cys-80-Cys-96, and Cys-92-Cys-110. Asn-64 and Asn-93 each carry an N-linked (GlcNAc...) asparagine glycan. Ca(2+) is bound by residues Lys-98, Asp-101, Asp-103, Asp-106, and Asp-107.

It belongs to the glycosyl hydrolase 22 family. As to quaternary structure, lactose synthase (LS) is a heterodimer of a catalytic component, beta1,4-galactosyltransferase (beta4Gal-T1) and a regulatory component, alpha-lactalbumin (LA). Mammary gland specific. Secreted in milk.

It localises to the secreted. Regulatory subunit of lactose synthase, changes the substrate specificity of galactosyltransferase in the mammary gland making glucose a good acceptor substrate for this enzyme. This enables LS to synthesize lactose, the major carbohydrate component of milk. In other tissues, galactosyltransferase transfers galactose onto the N-acetylglucosamine of the oligosaccharide chains in glycoproteins. The sequence is that of Alpha-lactalbumin (LALBA) from Bubalus bubalis (Domestic water buffalo).